We begin with the raw amino-acid sequence, 191 residues long: Large ribosomal subunit protein uL5 (191 aa).

The protein belongs to the universal ribosomal protein uL5 family. Part of the 50S ribosomal subunit; part of the 5S rRNA/L5/L18/L25 subcomplex. Contacts the 5S rRNA and the P site tRNA. Forms a bridge to the 30S subunit in the 70S ribosome.

Its function is as follows. This is one of the proteins that bind and probably mediate the attachment of the 5S RNA into the large ribosomal subunit, where it forms part of the central protuberance. In the 70S ribosome it contacts protein S13 of the 30S subunit (bridge B1b), connecting the 2 subunits; this bridge is implicated in subunit movement. Contacts the P site tRNA; the 5S rRNA and some of its associated proteins might help stabilize positioning of ribosome-bound tRNAs. This Thermobifida fusca (strain YX) protein is Large ribosomal subunit protein uL5.